The following is a 200-amino-acid chain: Protein GrpE (200 aa).

It belongs to the GrpE family. Homodimer.

It is found in the cytoplasm. Functionally, participates actively in the response to hyperosmotic and heat shock by preventing the aggregation of stress-denatured proteins, in association with DnaK and GrpE. It is the nucleotide exchange factor for DnaK and may function as a thermosensor. Unfolded proteins bind initially to DnaJ; upon interaction with the DnaJ-bound protein, DnaK hydrolyzes its bound ATP, resulting in the formation of a stable complex. GrpE releases ADP from DnaK; ATP binding to DnaK triggers the release of the substrate protein, thus completing the reaction cycle. Several rounds of ATP-dependent interactions between DnaJ, DnaK and GrpE are required for fully efficient folding. This Shewanella piezotolerans (strain WP3 / JCM 13877) protein is Protein GrpE.